The primary structure comprises 404 residues: MSHSRYFFTSESVSEGHPDKVSDQISDAVLDEFIKQDPNSRVACETFVTTGQVIVGGEVTTKGIVDIQTIARKTITEIGYTKGEYMFDANSCGVLSALHSQSPDINRGVDRKEEIEDEFDRVGAGDQGMMFGYACTDTPELMPAAIQYAQELVRLLAEIRKEGKIMTYLRPDSKSQVTLEYDENDKVLRVDAVVVSTQHDPEPAGMSEAEFQEVIKNDIIENVIRKVIPAELIDENTKFHINPTGRFEIGGPHGDTGLTGRKIIVDTYGGAAPHGGGAFSGKDPSKVDRSAAYAARHVAKNIVAAGLADKCTVQVSYAIGVARPVSIYINTHGTGKHGLSDSQIQEKAEAIFDLRPLAIIRRFNLDRPHGWCYRDTAAYGHFGREQFPWEKTEKVAELKAAFGL.

Polar residues predominate over residues 1-13 (MSHSRYFFTSESV). A disordered region spans residues 1–20 (MSHSRYFFTSESVSEGHPDK). ATP is bound at residue His-17. Residue Asp-19 participates in Mg(2+) binding. Glu-45 serves as a coordination point for K(+). Residues Glu-58 and Gln-101 each coordinate L-methionine. The flexible loop stretch occupies residues 101-111 (QSPDINRGVDR). ATP contacts are provided by residues 172–174 (DSK), 246–247 (RF), Asp-255, 261–262 (RK), Ala-278, and Lys-282. Asp-255 provides a ligand contact to L-methionine. Lys-286 is an L-methionine binding site.

Belongs to the AdoMet synthase family. As to quaternary structure, homotetramer; dimer of dimers. It depends on Mg(2+) as a cofactor. K(+) is required as a cofactor.

The protein localises to the cytoplasm. It catalyses the reaction L-methionine + ATP + H2O = S-adenosyl-L-methionine + phosphate + diphosphate. The protein operates within amino-acid biosynthesis; S-adenosyl-L-methionine biosynthesis; S-adenosyl-L-methionine from L-methionine: step 1/1. Catalyzes the formation of S-adenosylmethionine (AdoMet) from methionine and ATP. The overall synthetic reaction is composed of two sequential steps, AdoMet formation and the subsequent tripolyphosphate hydrolysis which occurs prior to release of AdoMet from the enzyme. The chain is S-adenosylmethionine synthase from Chlorobaculum parvum (strain DSM 263 / NCIMB 8327) (Chlorobium vibrioforme subsp. thiosulfatophilum).